The primary structure comprises 283 residues: Probable replication-associated protein repA1 (283 aa).

This sequence belongs to the IncFII RepA family.

In terms of biological role, this protein is essential for plasmid replication; it is involved in copy control functions. This Buchnera aphidicola subsp. Acyrthosiphon pisum (strain APS) (Acyrthosiphon pisum symbiotic bacterium) protein is Probable replication-associated protein repA1 (repA1).